The following is a 79-amino-acid chain: UPF0154 protein SAG1601 (79 aa).

A helical membrane pass occupies residues 5–25; sequence IWILLIIVALFGGLVGGIFIA.

The protein belongs to the UPF0154 family.

Its subcellular location is the membrane. The chain is UPF0154 protein SAG1601 from Streptococcus agalactiae serotype V (strain ATCC BAA-611 / 2603 V/R).